A 216-amino-acid polypeptide reads, in one-letter code: Thiopurine S-methyltransferase (216 aa).

The S-adenosyl-L-methionine site is built by Trp10, Leu45, Glu66, and Arg123.

It belongs to the class I-like SAM-binding methyltransferase superfamily. TPMT family.

It localises to the cytoplasm. It catalyses the reaction S-adenosyl-L-methionine + a thiopurine = S-adenosyl-L-homocysteine + a thiopurine S-methylether.. This Pseudomonas putida (strain ATCC 700007 / DSM 6899 / JCM 31910 / BCRC 17059 / LMG 24140 / F1) protein is Thiopurine S-methyltransferase.